We begin with the raw amino-acid sequence, 195 residues long: Thioredoxin reductase-like selenoprotein T (195 aa).

The signal sequence occupies residues 1 to 19 (MRLLLLLLVAASAMVRSEA). The cysteinyl-selenocysteine (Cys-Sec) cross-link spans 46–49 (CVSU). Residue Sec49 is a non-standard amino acid, selenocysteine. The helical transmembrane segment at 85–103 (IASFLSVFKLVLIGLIIVG) threads the bilayer.

Belongs to the SelWTH family. Selenoprotein T subfamily. May contain a selenide-sulfide bond between Cys-46 and Sec-49. This bond is speculated to serve as redox-active pair. Ubiquitous. Highly expressed in the endocrine pancreas.

It localises to the endoplasmic reticulum membrane. The catalysed reaction is [thioredoxin]-dithiol + NADP(+) = [thioredoxin]-disulfide + NADPH + H(+). Functionally, selenoprotein with thioredoxin reductase-like oxidoreductase activity. Protects dopaminergic neurons against oxidative stress and cell death. Involved in ADCYAP1/PACAP-induced calcium mobilization and neuroendocrine secretion. Plays a role in fibroblast anchorage and redox regulation. In gastric smooth muscle, modulates the contraction processes through the regulation of calcium release and MYLK activation. In pancreatic islets, involved in the control of glucose homeostasis, contributes to prolonged ADCYAP1/PACAP-induced insulin secretion. This Homo sapiens (Human) protein is Thioredoxin reductase-like selenoprotein T.